The primary structure comprises 794 residues: Alpha-1,3-galactosidase B (794 aa).

A signal peptide spans 1–57 (MEGNLSFSLMEASGRSIFFLIEGIREQSIKNMFSRMFSWSFVVAACLAGLFPAQSQG). PbH1 repeat units follow at residues 468–499 (SEDFHMKGGGVMVRKGTGRVHTAGADATHFSN), 609–631 (YPSVVFRNNIVRNNRARGSLFTT), 632–654 (PERVLVEGNLFDHSSGSAILLAG), 665–686 (CHEVVIRKNTFINNLTSRYQFT), and 707–728 (HRNVLIENNVFKTFDVPLLFAI).

Belongs to the glycosyl hydrolase 110 family. B subfamily.

The catalysed reaction is Hydrolysis of terminal, non-reducing branched (1-&gt;3)-alpha-D-galactosidic residues, producing free D-galactose.. The enzyme catalyses Hydrolysis of terminal, non-reducing linear (1-&gt;3)-alpha-D-galactosidic residues, producing free D-galactose.. It catalyses the reaction Hydrolysis of terminal, non-reducing alpha-D-galactose residues in alpha-D-galactosides, including galactose oligosaccharides, galactomannans and galactolipids.. Its function is as follows. Alpha-galactosidase. Removes both branched alpha-1,3-linked galactose residues of blood group B antigens and linear alpha-1,3-linked galactose structures. This is Alpha-1,3-galactosidase B (glaB) from Akkermansia muciniphila (strain ATCC BAA-835 / DSM 22959 / JCM 33894 / BCRC 81048 / CCUG 64013 / CIP 107961 / Muc).